Reading from the N-terminus, the 483-residue chain is Glutamate--tRNA ligase (483 aa).

A 'HIGH' region motif is present at residues 9 to 19 (PSPTGFLHIGN). Residues 253-257 (KLSKR) carry the 'KMSKS' region motif. Lys256 provides a ligand contact to ATP.

Belongs to the class-I aminoacyl-tRNA synthetase family. Glutamate--tRNA ligase type 1 subfamily. In terms of assembly, monomer.

It localises to the cytoplasm. The enzyme catalyses tRNA(Glu) + L-glutamate + ATP = L-glutamyl-tRNA(Glu) + AMP + diphosphate. Its function is as follows. Catalyzes the attachment of glutamate to tRNA(Glu) in a two-step reaction: glutamate is first activated by ATP to form Glu-AMP and then transferred to the acceptor end of tRNA(Glu). The protein is Glutamate--tRNA ligase of Mycoplasma mycoides subsp. mycoides SC (strain CCUG 32753 / NCTC 10114 / PG1).